The primary structure comprises 608 residues: Serine/arginine repetitive matrix protein 4 (608 aa).

Disordered regions lie at residues A34 to R246 and S261 to R608. Over residues G78 to P100 the composition is skewed to basic and acidic residues. Composition is skewed to basic residues over residues R107 to S123 and V131 to P187. The segment covering S188–C200 has biased composition (low complexity). A compositionally biased stretch (basic and acidic residues) spans E201–R213. Residues K214–C228 are compositionally biased toward basic residues. Low complexity predominate over residues T289 to S299. Over residues C322–N339 the composition is skewed to polar residues. 2 stretches are compositionally biased toward low complexity: residues R389–T420 and S428–S459. The span at P460–E477 shows a compositional bias: basic and acidic residues. Over residues R478–R494 the composition is skewed to basic residues. Residues D495–R504 are compositionally biased toward basic and acidic residues. The segment covering P518–R555 has biased composition (low complexity). Residues S556–T573 are compositionally biased toward basic residues. The span at S574–R608 shows a compositional bias: low complexity.

It belongs to the nSR100 family. In terms of processing, phosphorylated. In terms of tissue distribution, specifically expressed in neuronal cells (at protein level). Expressed in adult nervous system and sensory organ tissues.

It localises to the nucleus. Its function is as follows. Splicing factor specifically required for neural cell differentiation. Acts in conjunction with nPTB/PTBP2 by binding directly to its regulated target transcripts and promotes neural-specific exon inclusion in many genes that function in neural cell differentiation. Required to promote the inclusion of neural-specific exon 10 in nPTB/PTBP2, leading to increased expression of neural-specific nPTB/PTBP2. Also promotes the inclusion of exon 16 in DAAM1 in neuron extracts. Promotes alternative splicing of REST transcripts to produce REST isoform 2 (REST4) with greatly reduced repressive activity, thereby activating expression of REST targets in neural cells. Plays an important role during embryonic development as well as in the proper functioning of the adult nervous system. Regulates alternative splicing events in genes with important neuronal functions. This chain is Serine/arginine repetitive matrix protein 4 (Srrm4), found in Mus musculus (Mouse).